Consider the following 186-residue polypeptide: Threonylcarbamoyl-AMP synthase (186 aa).

The region spanning 5–186 (TQSINDAVKC…DAITGEILRL (182 aa)) is the YrdC-like domain.

It belongs to the SUA5 family. TsaC subfamily.

The protein localises to the cytoplasm. The catalysed reaction is L-threonine + hydrogencarbonate + ATP = L-threonylcarbamoyladenylate + diphosphate + H2O. In terms of biological role, required for the formation of a threonylcarbamoyl group on adenosine at position 37 (t(6)A37) in tRNAs that read codons beginning with adenine. Catalyzes the conversion of L-threonine, HCO(3)(-)/CO(2) and ATP to give threonylcarbamoyl-AMP (TC-AMP) as the acyladenylate intermediate, with the release of diphosphate. In Coxiella burnetii (strain RSA 493 / Nine Mile phase I), this protein is Threonylcarbamoyl-AMP synthase.